Consider the following 141-residue polypeptide: Large ribosomal subunit protein uL16 (141 aa).

The protein belongs to the universal ribosomal protein uL16 family. Part of the 50S ribosomal subunit.

In terms of biological role, binds 23S rRNA and is also seen to make contacts with the A and possibly P site tRNAs. The chain is Large ribosomal subunit protein uL16 from Campylobacter lari (strain RM2100 / D67 / ATCC BAA-1060).